The following is a 382-amino-acid chain: Manganese peroxidase H4 (382 aa).

The first 24 residues, 1-24 (MAFGSLLAFVALAAITRAAPTAES), serve as a signal peptide directing secretion. 5 cysteine pairs are disulfide-bonded: Cys27–Cys39, Cys38–Cys313, Cys57–Cys141, Cys277–Cys344, and Cys366–Cys373. The Mn(2+) site is built by Glu59 and Glu63. His70 functions as the Proton acceptor in the catalytic mechanism. The Ca(2+) site is built by Asp71, Gly86, Asp88, and Ser90. N-linked (GlcNAc...) asparagine glycosylation is found at Asn100 and Asn155. His197 contributes to the heme b binding site. Ca(2+) is bound at residue Thr198. A Mn(2+)-binding site is contributed by Asp203. Ca(2+) contacts are provided by Asp215, Thr217, Thr220, and Asp222. Asn241 is a glycosylation site (N-linked (GlcNAc...) asparagine).

It belongs to the peroxidase family. Ligninase subfamily. The cofactor is heme b. Ca(2+) serves as cofactor.

It localises to the secreted. The catalysed reaction is 2 Mn(2+) + H2O2 + 2 H(+) = 2 Mn(3+) + 2 H2O. Its function is as follows. Catalyzes the oxidation of Mn(2+) to Mn(3+). The latter, acting as a diffusible redox mediator, is capable of oxidizing a variety of lignin compounds. This chain is Manganese peroxidase H4, found in Phanerodontia chrysosporium (White-rot fungus).